The primary structure comprises 69 residues: DNA-directed RNA polymerase subunit omega (69 aa).

It belongs to the RNA polymerase subunit omega family. As to quaternary structure, the RNAP catalytic core consists of 2 alpha, 1 beta, 1 beta' and 1 omega subunit. When a sigma factor is associated with the core the holoenzyme is formed, which can initiate transcription.

The catalysed reaction is RNA(n) + a ribonucleoside 5'-triphosphate = RNA(n+1) + diphosphate. Functionally, promotes RNA polymerase assembly. Latches the N- and C-terminal regions of the beta' subunit thereby facilitating its interaction with the beta and alpha subunits. The protein is DNA-directed RNA polymerase subunit omega of Hahella chejuensis (strain KCTC 2396).